A 449-amino-acid chain; its full sequence is Glucose-6-phosphate isomerase (449 aa).

Glutamate 291 serves as the catalytic Proton donor. Active-site residues include histidine 312 and lysine 426.

It belongs to the GPI family.

The protein localises to the cytoplasm. It catalyses the reaction alpha-D-glucose 6-phosphate = beta-D-fructose 6-phosphate. Its pathway is carbohydrate biosynthesis; gluconeogenesis. It functions in the pathway carbohydrate degradation; glycolysis; D-glyceraldehyde 3-phosphate and glycerone phosphate from D-glucose: step 2/4. Functionally, catalyzes the reversible isomerization of glucose-6-phosphate to fructose-6-phosphate. The polypeptide is Glucose-6-phosphate isomerase (Streptococcus pneumoniae serotype 4 (strain ATCC BAA-334 / TIGR4)).